Reading from the N-terminus, the 767-residue chain is 5-methyltetrahydropteroyltriglutamate--homocysteine methyltransferase (767 aa).

Residues 17–20 and K117 contribute to the 5-methyltetrahydropteroyltri-L-glutamate site; that span reads RELK. L-homocysteine-binding positions include 442–444 and E495; that span reads IGS. L-methionine contacts are provided by residues 442-444 and E495; that span reads IGS. 5-methyltetrahydropteroyltri-L-glutamate-binding positions include 526–527 and W572; that span reads RC. Residue D610 participates in L-homocysteine binding. Position 610 (D610) interacts with L-methionine. E616 contributes to the 5-methyltetrahydropteroyltri-L-glutamate binding site. The Zn(2+) site is built by H653, C655, and E677. Residue H706 is the Proton donor of the active site. Position 738 (C738) interacts with Zn(2+).

It belongs to the vitamin-B12 independent methionine synthase family. The cofactor is Zn(2+).

It catalyses the reaction 5-methyltetrahydropteroyltri-L-glutamate + L-homocysteine = tetrahydropteroyltri-L-glutamate + L-methionine. It functions in the pathway amino-acid biosynthesis; L-methionine biosynthesis via de novo pathway; L-methionine from L-homocysteine (MetE route): step 1/1. Functionally, catalyzes the transfer of a methyl group from 5-methyltetrahydrofolate to homocysteine resulting in methionine formation. This Bifidobacterium animalis subsp. lactis (strain AD011) protein is 5-methyltetrahydropteroyltriglutamate--homocysteine methyltransferase.